The following is a 1380-amino-acid chain: DNA-directed RNA polymerase subunit beta (1380 aa).

It belongs to the RNA polymerase beta chain family. The RNAP catalytic core consists of 2 alpha, 1 beta, 1 beta' and 1 omega subunit. When a sigma factor is associated with the core the holoenzyme is formed, which can initiate transcription.

The catalysed reaction is RNA(n) + a ribonucleoside 5'-triphosphate = RNA(n+1) + diphosphate. DNA-dependent RNA polymerase catalyzes the transcription of DNA into RNA using the four ribonucleoside triphosphates as substrates. In Sinorhizobium fredii (strain NBRC 101917 / NGR234), this protein is DNA-directed RNA polymerase subunit beta.